The sequence spans 123 residues: uncharacterized protein (123 aa).

It to insertion element IS1016 transposase.

This is an uncharacterized protein from Haemophilus influenzae (strain ATCC 51907 / DSM 11121 / KW20 / Rd).